The following is a 611-amino-acid chain: O-fucosyltransferase 8 (611 aa).

A disordered region spans residues 1–29; sequence MGKQGSPRSPRPETIDKEEKFGRRSLDSL. A compositionally biased stretch (basic and acidic residues) spans 10–26; sequence PRPETIDKEEKFGRRSL. Residues 78–98 form a helical; Signal-anchor for type II membrane protein membrane-spanning segment; that stretch reads IVLMISVTGFIFCMDSIMVSI. N-linked (GlcNAc...) asparagine glycans are attached at residues N115, N216, and N270. 386–388 is a binding site for substrate; the sequence is HLR. N506 carries an N-linked (GlcNAc...) asparagine glycan.

Belongs to the glycosyltransferase GT106 family.

Its subcellular location is the membrane. The protein operates within glycan metabolism. The chain is O-fucosyltransferase 8 from Arabidopsis thaliana (Mouse-ear cress).